Here is a 201-residue protein sequence, read N- to C-terminus: Kinetochore protein SPC24 homolog (201 aa).

Residues D78–K133 adopt a coiled-coil conformation.

This sequence belongs to the SPC24 family. Component of the NDC80 complex, which consists of NDC80, NUF2, SPC24 and SPC25. Highly expressed in actively dividing tissues, such as shoot apical meristem (SAM), root apical meristem (RAM), vasculature, newly emerging leaves and inflorescence shoots.

It localises to the chromosome. The protein resides in the centromere. Acts as a component of the essential kinetochore-associated NDC80 complex, which is required for chromosome segregation and spindle checkpoint activity to ensure proper cell division. Required for the maintenance of plant architecture. The protein is Kinetochore protein SPC24 homolog of Arabidopsis thaliana (Mouse-ear cress).